The chain runs to 375 residues: Ornithine transcarbamylase, chloroplastic (375 aa).

The transit peptide at 1 to 53 (MAAAMASHVSTARSPALSFSSSSSSFFPGTTLRRFSAVSLPSPALPRLRVSCQ) directs the protein to the chloroplast. Residue alanine 54 is modified to N-acetylalanine. Residues 123 to 126 (SMRT), arginine 174, histidine 201, and glutamine 204 each bind carbamoyl phosphate. L-ornithine is bound by residues asparagine 232, aspartate 293, serine 297, and methionine 298. Catalysis depends on cysteine 333, which acts as the Proton acceptor. Carbamoyl phosphate is bound by residues 333-334 (CL) and arginine 361.

Belongs to the aspartate/ornithine carbamoyltransferase superfamily. OTCase family.

It is found in the plastid. The protein resides in the chloroplast. It catalyses the reaction carbamoyl phosphate + L-ornithine = L-citrulline + phosphate + H(+). The sequence is that of Ornithine transcarbamylase, chloroplastic (OTC) from Arabidopsis thaliana (Mouse-ear cress).